A 427-amino-acid polypeptide reads, in one-letter code: Flotillin-1 (427 aa).

3 positions are modified to phosphoserine: Ser-19, Ser-163, and Ser-385. Thr-387 is subject to Phosphothreonine.

It belongs to the band 7/mec-2 family. Flotillin subfamily. In terms of assembly, heterooligomeric complex of flotillin-1 and flotillin-2 and caveolin-1 and caveolin-2. Interacts with ECPAS.

It localises to the cell membrane. It is found in the endosome. The protein resides in the membrane. Its subcellular location is the caveola. The protein localises to the melanosome. It localises to the membrane raft. Its function is as follows. May act as a scaffolding protein within caveolar membranes, functionally participating in formation of caveolae or caveolae-like vesicles. In Pongo abelii (Sumatran orangutan), this protein is Flotillin-1 (FLOT1).